A 137-amino-acid polypeptide reads, in one-letter code: Large ribosomal subunit protein uL16 (137 aa).

This sequence belongs to the universal ribosomal protein uL16 family. As to quaternary structure, part of the 50S ribosomal subunit.

Functionally, binds 23S rRNA and is also seen to make contacts with the A and possibly P site tRNAs. This is Large ribosomal subunit protein uL16 from Afipia carboxidovorans (strain ATCC 49405 / DSM 1227 / KCTC 32145 / OM5) (Oligotropha carboxidovorans).